A 416-amino-acid chain; its full sequence is Solute carrier family 25 member 46 (416 aa).

Over residues 1-13 (MQPRRPDRFDGLE) the composition is skewed to basic and acidic residues. Positions 1-91 (MQPRRPDRFD…GEESSSSSSG (91 aa)) are disordered. The span at 37 to 49 (SFSSSGDLSQHWV) shows a compositional bias: polar residues. Residues 82 to 91 (GEESSSSSSG) are compositionally biased toward low complexity. One copy of the Solcar 1 repeat lies at 94–185 (HLNRFAGFGI…GMLSEFTHLP (92 aa)). Transmembrane regions (helical) follow at residues 101-121 (FGIG…CIVL), 161-181 (MGST…LSEF), 197-217 (IGGH…FYSA), 256-276 (LLPL…HYII), 312-332 (FPEL…LYPL), and 381-401 (LGFY…AIVL). The stretch at 309–414 (EDYFPELIAN…KIIYSSVVQT (106 aa)) is one Solcar 2 repeat.

Belongs to the mitochondrial carrier (TC 2.A.29) family.

It localises to the mitochondrion outer membrane. Its function is as follows. May play a role in mitochondrial dynamics by controlling mitochondrial membrane fission. This chain is Solute carrier family 25 member 46 (slc25a46), found in Xenopus tropicalis (Western clawed frog).